The sequence spans 152 residues: Arginine repressor (152 aa).

It belongs to the ArgR family.

The protein localises to the cytoplasm. The protein operates within amino-acid biosynthesis; L-arginine biosynthesis [regulation]. Functionally, regulates arginine biosynthesis genes. The sequence is that of Arginine repressor from Lactiplantibacillus plantarum (strain ATCC BAA-793 / NCIMB 8826 / WCFS1) (Lactobacillus plantarum).